The primary structure comprises 276 residues: Extracellular metalloprotease 1 (276 aa).

Positions 1 to 18 are cleaved as a signal peptide; sequence MRVSVPVLALAFGSLAAA. His191 serves as a coordination point for Zn(2+). Residue Glu192 is part of the active site. A Zn(2+)-binding site is contributed by His195. Residues 211 to 233 form a disordered region; the sequence is GDYVSDTPPQRSPSSGCPVGRDS. Residues Cys227 and Cys253 are joined by a disulfide bond.

This sequence belongs to the peptidase M43B family.

Its subcellular location is the secreted. Functionally, secreted metalloproteinase that allows assimilation of proteinaceous substrates. Pays a pivotal role as a pathogenicity determinant during infections and contributes to the ability of the pathogen to persist within the mammalian host. Digests an immunodominant cell surface antigen (SOWgp) and prevents host recognition of endospores during the phase of development when these fungal cells are most vulnerable to phagocytic cell defenses. This is Extracellular metalloprotease 1 (MEP1) from Coccidioides posadasii (strain C735) (Valley fever fungus).